Consider the following 526-residue polypeptide: MELKTEEEEVGGVQPVSIQAFASSSTLHGLAHIFSYERLSLKRALWALCFLGSLAVLLCVCTERVQYYFCYHHVTKLDEVAASQLTFPAVTLCNLNEFRFSQVSKNDLYHAGELLALLNNRYEIPDTQMADEKQLEILQDKANFRSFKPKPFNMREFYDRAGHDIRDMLLSCHFRGEACSAEDFKVVFTRYGKCYTFNSGQDGRPRLKTMKGGTGNGLEIMLDIQQDEYLPVWGETDETSFEAGIKVQIHSQDEPPFIDQLGFGVAPGFQTFVSCQEQRLIYLPSPWGTCNAVTMDSDFFDSYSITACRIDCETRYLVENCNCRMVHMPGDAPYCTPEQYKECADPALDFLVEKDQEYCVCEMPCNLTRYGKELSMVKIPSKASAKYLAKKFNKSEQYIGENILVLDIFFEVLNYETIEQKKAYEIAGLLGDIGGQMGLFIGASILTVLELFDYAYEVIKHRLCRRGKCQKEAKRNSADKGVALSLDDVKRHNPCESLRGHPAGMTYAANILPHHPARGTFEDFTC.

Residues 1-49 (MELKTEEEEVGGVQPVSIQAFASSSTLHGLAHIFSYERLSLKRALWALC) lie on the Cytoplasmic side of the membrane. A helical transmembrane segment spans residues 50–66 (FLGSLAVLLCVCTERVQ). At 67 to 425 (YYFCYHHVTK…ETIEQKKAYE (359 aa)) the chain is on the extracellular side. Intrachain disulfides connect Cys-93–Cys-194, Cys-172–Cys-179, Cys-290–Cys-365, Cys-308–Cys-361, Cys-312–Cys-359, Cys-321–Cys-343, and Cys-323–Cys-335. Asn-366 and Asn-393 each carry an N-linked (GlcNAc...) asparagine glycan. A discontinuously helical transmembrane segment spans residues 426–456 (IAGLLGDIGGQMGLFIGASILTVLELFDYAY). Positions 442–444 (GAS) match the GAS motif; ion selectivity filter motif. At 457 to 526 (EVIKHRLCRR…ARGTFEDFTC (70 aa)) the chain is on the cytoplasmic side. Residue Ser-477 is modified to Phosphoserine; by PKA. Residue Ser-497 is modified to Phosphoserine.

The protein belongs to the amiloride-sensitive sodium channel (TC 1.A.6) family. ASIC1 subfamily. As to quaternary structure, homotrimer. Heterotrimer; with other ASIC proteins producing channel with different properties. Interacts with PICK1; regulates ASIC1 clustering in membranes. Interacts with STOM; alters heterotrimeric ASIC channels activity. Post-translationally, pH-gating could be regulated by serine proteases. In terms of processing, phosphorylation by PKA regulates interaction with PICK1 and subcellular localization. Phosphorylation by PKC may regulate the channel. As to expression, expressed in brain areas receiving strong excitatory corticofugal input. In hippocampus, expressed in the hilus of the dentate gyrus. In the cerebral cortex expressed in anterior and posterior cingulate cortex, sensory and motor cortices. In the sensory cortex strongest expression is detected in the whisker barrel field. In sensorimotor and cingulate cortex expression is elevated in layer III. Also expressed in basal ganglia, striatum, ventral pallidum, olfactory tubercle, and nucleus accumbens. Weakly expressed in thalamus with the exception of the habenula and the medial septal nuclei. In olfactory bulb, preferentially expressed in the glomerular layer, within glomeruli. Expressed in cerebellum in the molecular and granule cell layers. Strongly expressed in amygdala complex, particularly in the lateral and basolateral nuclei. Isoform 1 is more abundant in brain compared to isoform 2 (at protein level). Expressed in the nodose ganglion and dorsal root ganglion. Expressed in dendritic spine cells.

It localises to the cell membrane. Its subcellular location is the postsynaptic cell membrane. The protein resides in the cell projection. The protein localises to the dendrite. The enzyme catalyses Na(+)(in) = Na(+)(out). It catalyses the reaction Ca(2+)(in) = Ca(2+)(out). The catalysed reaction is K(+)(in) = K(+)(out). It carries out the reaction Li(+)(in) = Li(+)(out). With respect to regulation, inhibited by the diuretic drug amiloride. Its activity is regulated as follows. The activity of the channel is sensitive to rapid decrease in osmotic pressure. Forms voltage-independent, pH-gated trimeric sodium channels that act as postsynaptic excitatory receptors in the nervous system, playing a crucial role in regulating synaptic plasticity, learning, and memory. Upon extracellular pH drop this channel elicits transient, fast activating, and completely desensitizing inward currents. Displays high selectivity for sodium ions but can also permit the permeation of other cations. Regulates more or less directly intracellular calcium concentration and CaMKII phosphorylation, and thereby the density of dendritic spines. Modulates neuronal activity in the circuits underlying innate fear. In terms of biological role, has high selectivity for sodium ions but is also potentially permeable to other cations including potassium. Could function in cochlear mechanoelectrical transduction. In Mus musculus (Mouse), this protein is Acid-sensing ion channel 1.